The following is a 133-amino-acid chain: ATP synthase epsilon chain, chloroplastic (133 aa).

This sequence belongs to the ATPase epsilon chain family. F-type ATPases have 2 components, CF(1) - the catalytic core - and CF(0) - the membrane proton channel. CF(1) has five subunits: alpha(3), beta(3), gamma(1), delta(1), epsilon(1). CF(0) has three main subunits: a, b and c.

The protein resides in the plastid. Its subcellular location is the chloroplast thylakoid membrane. Functionally, produces ATP from ADP in the presence of a proton gradient across the membrane. This chain is ATP synthase epsilon chain, chloroplastic, found in Nephroselmis olivacea (Green alga).